A 179-amino-acid chain; its full sequence is Auxin-induced protein IAA6 (179 aa).

The short motif at 13–17 (LRLGL) is the EAR-like (transcriptional repression) element. Residues 31-52 (FSEIDGGVEENGGSGDRKSVDK) form a disordered region. Positions 75–163 (KMYMKVSMDG…KRLRIMKRSD (89 aa)) constitute a PB1 domain.

Belongs to the Aux/IAA family. As to quaternary structure, homodimers and heterodimers.

It localises to the nucleus. Aux/IAA proteins are short-lived transcriptional factors that function as repressors of early auxin response genes at low auxin concentrations. Repression is thought to result from the interaction with auxin response factors (ARFs), proteins that bind to the auxin-responsive promoter element (AuxRE). Formation of heterodimers with ARF proteins may alter their ability to modulate early auxin response genes expression. The protein is Auxin-induced protein IAA6 (IAA6) of Pisum sativum (Garden pea).